Consider the following 378-residue polypeptide: uncharacterized protein (378 aa).

The Guanylate cyclase domain maps to 208–317; the sequence is GIGFADLSSF…NPVNLAARLV (110 aa).

This sequence belongs to the adenylyl cyclase class-4/guanylyl cyclase family.

This is an uncharacterized protein from Mycobacterium bovis (strain ATCC BAA-935 / AF2122/97).